The primary structure comprises 325 residues: Elongation factor P--(R)-beta-lysine ligase (325 aa).

Substrate is bound at residue 76–78; sequence SPE. ATP contacts are provided by residues 100–102 and Asn-109; that span reads RNE. Residue Tyr-118 coordinates substrate. An ATP-binding site is contributed by 244–245; that stretch reads EL. Position 251 (Glu-251) interacts with substrate. Residue Gly-300 coordinates ATP.

Belongs to the class-II aminoacyl-tRNA synthetase family. EpmA subfamily. In terms of assembly, homodimer.

The enzyme catalyses D-beta-lysine + L-lysyl-[protein] + ATP = N(6)-((3R)-3,6-diaminohexanoyl)-L-lysyl-[protein] + AMP + diphosphate + H(+). Its function is as follows. With EpmB is involved in the beta-lysylation step of the post-translational modification of translation elongation factor P (EF-P). Catalyzes the ATP-dependent activation of (R)-beta-lysine produced by EpmB, forming a lysyl-adenylate, from which the beta-lysyl moiety is then transferred to the epsilon-amino group of a conserved specific lysine residue in EF-P. The chain is Elongation factor P--(R)-beta-lysine ligase from Enterobacter sp. (strain 638).